Here is a 277-residue protein sequence, read N- to C-terminus: tRNA U34 carboxymethyltransferase (277 aa).

Carboxy-S-adenosyl-L-methionine-binding positions include Lys-46, Trp-60, Lys-65, Gly-84, 106–108, 133–134, Tyr-153, and Arg-268; these read DPS and VE.

This sequence belongs to the class I-like SAM-binding methyltransferase superfamily. CmoB family. As to quaternary structure, homotetramer.

It carries out the reaction carboxy-S-adenosyl-L-methionine + 5-hydroxyuridine(34) in tRNA = 5-carboxymethoxyuridine(34) in tRNA + S-adenosyl-L-homocysteine + H(+). Functionally, catalyzes carboxymethyl transfer from carboxy-S-adenosyl-L-methionine (Cx-SAM) to 5-hydroxyuridine (ho5U) to form 5-carboxymethoxyuridine (cmo5U) at position 34 in tRNAs. In Wolinella succinogenes (strain ATCC 29543 / DSM 1740 / CCUG 13145 / JCM 31913 / LMG 7466 / NCTC 11488 / FDC 602W) (Vibrio succinogenes), this protein is tRNA U34 carboxymethyltransferase.